A 396-amino-acid chain; its full sequence is Digeranylgeranylglycerophospholipid reductase (396 aa).

G14, E33, C44, G45, G47, R100, A124, E162, D283, G295, and I296 together coordinate FAD. The a 2,3-bis-O-(geranylgeranyl)-sn-glycerol 1-phospholipid site is built by K338 and V374.

It belongs to the geranylgeranyl reductase family. DGGGPL reductase subfamily. The cofactor is FAD.

The enzyme catalyses 2,3-bis-O-(phytanyl)-sn-glycerol 1-phosphate + 8 NADP(+) = 2,3-bis-O-(geranylgeranyl)-sn-glycerol 1-phosphate + 8 NADPH + 8 H(+). It catalyses the reaction 2,3-bis-O-(phytanyl)-sn-glycerol 1-phosphate + 8 NAD(+) = 2,3-bis-O-(geranylgeranyl)-sn-glycerol 1-phosphate + 8 NADH + 8 H(+). The catalysed reaction is a 2,3-bis-O-phytanyl-sn-glycerol 1-phospholipid + 8 A = a 2,3-bis-O-(geranylgeranyl)-sn-glycerol 1-phospholipid + 8 AH2. It carries out the reaction CDP-2,3-bis-O-(geranylgeranyl)-sn-glycerol + 8 AH2 = CDP-2,3-bis-O-(phytanyl)-sn-glycerol + 8 A. The enzyme catalyses archaetidylserine + 8 AH2 = 2,3-bis-O-phytanyl-sn-glycero-3-phospho-L-serine + 8 A. Its pathway is membrane lipid metabolism; glycerophospholipid metabolism. Its function is as follows. Is involved in the reduction of 2,3-digeranylgeranylglycerophospholipids (unsaturated archaeols) into 2,3-diphytanylglycerophospholipids (saturated archaeols) in the biosynthesis of archaeal membrane lipids. Catalyzes the formation of archaetidic acid (2,3-di-O-phytanyl-sn-glyceryl phosphate) from 2,3-di-O-geranylgeranylglyceryl phosphate (DGGGP) via the hydrogenation of each double bond of the isoprenoid chains. Is also probably able to reduce double bonds of geranyl groups in CDP-2,3-bis-O-(geranylgeranyl)-sn-glycerol and archaetidylserine, thus acting at various stages in the biosynthesis of archaeal membrane lipids. This is Digeranylgeranylglycerophospholipid reductase from Thermoplasma volcanium (strain ATCC 51530 / DSM 4299 / JCM 9571 / NBRC 15438 / GSS1).